A 350-amino-acid polypeptide reads, in one-letter code: Nicotinate-nucleotide--dimethylbenzimidazole phosphoribosyltransferase (350 aa).

The active-site Proton acceptor is glutamate 316.

This sequence belongs to the CobT family.

The catalysed reaction is 5,6-dimethylbenzimidazole + nicotinate beta-D-ribonucleotide = alpha-ribazole 5'-phosphate + nicotinate + H(+). It participates in nucleoside biosynthesis; alpha-ribazole biosynthesis; alpha-ribazole from 5,6-dimethylbenzimidazole: step 1/2. Catalyzes the synthesis of alpha-ribazole-5'-phosphate from nicotinate mononucleotide (NAMN) and 5,6-dimethylbenzimidazole (DMB). The protein is Nicotinate-nucleotide--dimethylbenzimidazole phosphoribosyltransferase of Pseudomonas syringae pv. syringae (strain B728a).